We begin with the raw amino-acid sequence, 152 residues long: Cytochrome c oxidase subunit 5A, mitochondrial (152 aa).

A mitochondrion-targeting transit peptide spans 1 to 43 (MLGTALRRCAVAAAAASRAGPRGLLHPAPAPGPAAAIQSIRCY). Residues 2–22 (LGTALRRCAVAAAAASRAGPR) carry the SIFI-degron motif. N6-acetyllysine occurs at positions 89 and 115. T143 bears the Phosphothreonine mark.

Belongs to the cytochrome c oxidase subunit 5A family. As to quaternary structure, component of the cytochrome c oxidase (complex IV, CIV), a multisubunit enzyme composed of 14 subunits. The complex is composed of a catalytic core of 3 subunits MT-CO1, MT-CO2 and MT-CO3, encoded in the mitochondrial DNA, and 11 supernumerary subunits COX4I, COX5A, COX5B, COX6A, COX6B, COX6C, COX7A, COX7B, COX7C, COX8 and NDUFA4, which are encoded in the nuclear genome. The complex exists as a monomer or a dimer and forms supercomplexes (SCs) in the inner mitochondrial membrane with NADH-ubiquinone oxidoreductase (complex I, CI) and ubiquinol-cytochrome c oxidoreductase (cytochrome b-c1 complex, complex III, CIII), resulting in different assemblies (supercomplex SCI(1)III(2)IV(1) and megacomplex MCI(2)III(2)IV(2)). Interacts with AFG1L. Interacts with RAB5IF. In response to mitochondrial stress, the precursor protein is ubiquitinated by the SIFI complex in the cytoplasm before mitochondrial import, leading to its degradation. Within the SIFI complex, UBR4 initiates ubiquitin chain that are further elongated or branched by KCMF1.

It localises to the mitochondrion inner membrane. It participates in energy metabolism; oxidative phosphorylation. In terms of biological role, component of the cytochrome c oxidase, the last enzyme in the mitochondrial electron transport chain which drives oxidative phosphorylation. The respiratory chain contains 3 multisubunit complexes succinate dehydrogenase (complex II, CII), ubiquinol-cytochrome c oxidoreductase (cytochrome b-c1 complex, complex III, CIII) and cytochrome c oxidase (complex IV, CIV), that cooperate to transfer electrons derived from NADH and succinate to molecular oxygen, creating an electrochemical gradient over the inner membrane that drives transmembrane transport and the ATP synthase. Cytochrome c oxidase is the component of the respiratory chain that catalyzes the reduction of oxygen to water. Electrons originating from reduced cytochrome c in the intermembrane space (IMS) are transferred via the dinuclear copper A center (CU(A)) of subunit 2 and heme A of subunit 1 to the active site in subunit 1, a binuclear center (BNC) formed by heme A3 and copper B (CU(B)). The BNC reduces molecular oxygen to 2 water molecules using 4 electrons from cytochrome c in the IMS and 4 protons from the mitochondrial matrix. This is Cytochrome c oxidase subunit 5A, mitochondrial (COX5A) from Eulemur fulvus fulvus (Brown lemur).